We begin with the raw amino-acid sequence, 268 residues long: Regulation of nuclear pre-mRNA domain-containing protein 1A (268 aa).

Residues 1 to 133 (MSAFSEAALE…QLRQALYGDR (133 aa)) form the CID domain.

This sequence belongs to the UPF0400 (RTT103) family. As to quaternary structure, may form a heterodimer with RPRD1B. Associates with the RNA polymerase II subunit POLR2A (via CTD phosphorylated at 'Ser-2' and 'Ser-7' of the heptad repeats).

The protein localises to the nucleus. Interacts with phosphorylated C-terminal heptapeptide repeat domain (CTD) of the largest RNA polymerase II subunit POLR2A, and participates in dephosphorylation of the CTD by RPAP2. May act as a negative regulator of cyclin-D1 (CCND1) and cyclin-E (CCNE1) in the cell cycle. The sequence is that of Regulation of nuclear pre-mRNA domain-containing protein 1A (RPRD1A) from Gallus gallus (Chicken).